The sequence spans 328 residues: Thiamine-monophosphate kinase (328 aa).

D30, T45, T46, and D47 together coordinate Mg(2+). H54 lines the substrate pocket. Positions 75 and 122 each coordinate Mg(2+). Residues 121–122 and R146 each bind ATP; that span reads GD. A Mg(2+)-binding site is contributed by D211. S213 is a binding site for ATP. D214 lines the Mg(2+) pocket. Residues E262 and F321 each contribute to the substrate site.

The protein belongs to the thiamine-monophosphate kinase family.

It carries out the reaction thiamine phosphate + ATP = thiamine diphosphate + ADP. It participates in cofactor biosynthesis; thiamine diphosphate biosynthesis; thiamine diphosphate from thiamine phosphate: step 1/1. Its function is as follows. Catalyzes the ATP-dependent phosphorylation of thiamine-monophosphate (TMP) to form thiamine-pyrophosphate (TPP), the active form of vitamin B1. The protein is Thiamine-monophosphate kinase of Haemophilus influenzae (strain ATCC 51907 / DSM 11121 / KW20 / Rd).